Here is a 413-residue protein sequence, read N- to C-terminus: uncharacterized protein (413 aa).

This is an uncharacterized protein from Mycobacterium tuberculosis (strain ATCC 25618 / H37Rv).